The primary structure comprises 101 residues: Ascorbate-specific PTS system EIIB component (101 aa).

One can recognise a PTS EIIB type-2 domain in the interval Val3–Phe96. Catalysis depends on Cys9, which acts as the Phosphocysteine intermediate. Cys9 is modified (phosphocysteine).

It is found in the cytoplasm. It catalyses the reaction N(pros)-phospho-L-histidyl-[protein] + L-ascorbate(out) = L-ascorbate 6-phosphate(in) + L-histidyl-[protein]. The phosphoenolpyruvate-dependent sugar phosphotransferase system (sugar PTS), a major carbohydrate active transport system, catalyzes the phosphorylation of incoming sugar substrates concomitantly with their translocation across the cell membrane. The enzyme II UlaABC PTS system is involved in ascorbate transport. The polypeptide is Ascorbate-specific PTS system EIIB component (ulaB) (Escherichia coli O6:H1 (strain CFT073 / ATCC 700928 / UPEC)).